We begin with the raw amino-acid sequence, 222 residues long: Pyridoxine/pyridoxamine 5'-phosphate oxidase (222 aa).

Substrate-binding positions include 14–17 and lysine 71; that span reads RRNY. Residues 66 to 71, 81 to 82, arginine 87, lysine 88, and glutamine 110 each bind FMN; these read RTVLLK and FT. Tyrosine 128, arginine 132, and serine 136 together coordinate substrate. Residues 145-146 and tryptophan 190 contribute to the FMN site; that span reads QS. Residue 196–198 participates in substrate binding; it reads RLN. Arginine 200 contacts FMN.

It belongs to the pyridoxamine 5'-phosphate oxidase family. As to quaternary structure, homodimer. It depends on FMN as a cofactor.

It catalyses the reaction pyridoxamine 5'-phosphate + O2 + H2O = pyridoxal 5'-phosphate + H2O2 + NH4(+). The catalysed reaction is pyridoxine 5'-phosphate + O2 = pyridoxal 5'-phosphate + H2O2. The protein operates within cofactor metabolism; pyridoxal 5'-phosphate salvage; pyridoxal 5'-phosphate from pyridoxamine 5'-phosphate: step 1/1. It functions in the pathway cofactor metabolism; pyridoxal 5'-phosphate salvage; pyridoxal 5'-phosphate from pyridoxine 5'-phosphate: step 1/1. Its function is as follows. Catalyzes the oxidation of either pyridoxine 5'-phosphate (PNP) or pyridoxamine 5'-phosphate (PMP) into pyridoxal 5'-phosphate (PLP). The chain is Pyridoxine/pyridoxamine 5'-phosphate oxidase from Prochlorococcus marinus (strain MIT 9303).